The primary structure comprises 160 residues: Transcription antitermination protein NusB (160 aa).

This sequence belongs to the NusB family.

Involved in transcription antitermination. Required for transcription of ribosomal RNA (rRNA) genes. Binds specifically to the boxA antiterminator sequence of the ribosomal RNA (rrn) operons. This is Transcription antitermination protein NusB from Mycolicibacterium smegmatis (strain ATCC 700084 / mc(2)155) (Mycobacterium smegmatis).